The following is a 161-amino-acid chain: Large ribosomal subunit protein uL10 (161 aa).

This sequence belongs to the universal ribosomal protein uL10 family. Part of the ribosomal stalk of the 50S ribosomal subunit. The N-terminus interacts with L11 and the large rRNA to form the base of the stalk. The C-terminus forms an elongated spine to which L12 dimers bind in a sequential fashion forming a multimeric L10(L12)X complex.

Forms part of the ribosomal stalk, playing a central role in the interaction of the ribosome with GTP-bound translation factors. The polypeptide is Large ribosomal subunit protein uL10 (Campylobacter curvus (strain 525.92)).